A 418-amino-acid chain; its full sequence is Serine--tRNA ligase (418 aa).

226–228 (TSE) is a binding site for L-serine. Residues 257 to 259 (RRE) and Val-273 contribute to the ATP site. Glu-280 provides a ligand contact to L-serine. 344–347 (ELTS) lines the ATP pocket. Thr-379 lines the L-serine pocket.

The protein belongs to the class-II aminoacyl-tRNA synthetase family. Type-1 seryl-tRNA synthetase subfamily. Homodimer. The tRNA molecule binds across the dimer.

It localises to the cytoplasm. It carries out the reaction tRNA(Ser) + L-serine + ATP = L-seryl-tRNA(Ser) + AMP + diphosphate + H(+). The enzyme catalyses tRNA(Sec) + L-serine + ATP = L-seryl-tRNA(Sec) + AMP + diphosphate + H(+). The protein operates within aminoacyl-tRNA biosynthesis; selenocysteinyl-tRNA(Sec) biosynthesis; L-seryl-tRNA(Sec) from L-serine and tRNA(Sec): step 1/1. Functionally, catalyzes the attachment of serine to tRNA(Ser). Is also able to aminoacylate tRNA(Sec) with serine, to form the misacylated tRNA L-seryl-tRNA(Sec), which will be further converted into selenocysteinyl-tRNA(Sec). The sequence is that of Serine--tRNA ligase from Mycobacteroides abscessus (strain ATCC 19977 / DSM 44196 / CCUG 20993 / CIP 104536 / JCM 13569 / NCTC 13031 / TMC 1543 / L948) (Mycobacterium abscessus).